The following is a 60-amino-acid chain: MKNTILILFTAFIALLGFFGMSAEALADPIADPLAGPNAEADPEAIKWKAILDAVKKVIG.

Positions 1 to 27 are cleaved as a signal peptide; it reads MKNTILILFTAFIALLGFFGMSAEALA. AXPX repeat units lie at residues 27–30, 31–34, 35–38, and 41–43; these read ADPI, ADPL, AGPN, and ADP. Residues 28–45 constitute a propeptide that is removed on maturation; the sequence is DPIADPLAGPNAEADPEA. Ile59 is subject to Isoleucine amide.

The protein belongs to the MCD family. Mastoparan subfamily. Expressed by the venom gland.

The protein localises to the secreted. Its subcellular location is the target cell membrane. Antimicrobial and mast cell degranulating peptide. Has broad spectrum antibacterial activity against both Gram-positive and Gram-negative bacteria (S.aureus MIC=32-64 ug/ml, S.xylosus MIC=2 ug/ml, S.alactolyticus MIC=12 ug/ml, C.koseri MIC=4 ug/ml, E.coli MIC=8 ug/ml, K.pneumoniae MIC=32 ug/ml, P.aerugiosa MIC=192 ug/ml, S.choleraesuis MIC=32 ug/ml, S.typhimurium MIC=32 ug/ml, V.parahamelytics MIC=16 ug/ml). Affects membrane permeability of E.coli. Shows hemolytic activities on sheep, chicken and human erythrocytes. Its mast cell degranulation activity may be related to the activation of G-protein coupled receptors in mast cells as well as interaction with other proteins located in cell endosomal membranes in the mast cells. In Vespa analis (Yellow-vented hornet), this protein is Mastoparan-A.